The chain runs to 50 residues: MGLWISFGTPPSYTYLLIMNHKLLLINNNNLTEVHTYFNININIDKMYIH.

The protein localises to the mitochondrion. This is an uncharacterized protein from Saccharomyces cerevisiae (strain ATCC 204508 / S288c) (Baker's yeast).